The following is a 639-amino-acid chain: Extracellular metalloproteinase NpIII (639 aa).

A signal peptide spans 1–16 (MHMLLFIGALALPVFV). A propeptide spanning residues 17 to 245 (CTQSCEPASL…IHGVVDYVSE (229 aa)) is cleaved from the precursor. Asn287, Asn320, Asn336, and Asn368 each carry an N-linked (GlcNAc...) asparagine glycan. His429 contributes to the Zn(2+) binding site. The active site involves Glu430. Position 433 (His433) interacts with Zn(2+). Asn509 carries N-linked (GlcNAc...) asparagine glycosylation.

This sequence belongs to the peptidase M36 family. Requires Zn(2+) as cofactor.

It localises to the secreted. Functionally, secreted metalloproteinase that allows assimilation of proteinaceous substrates. The chain is Extracellular metalloproteinase NpIII (NpIII) from Aspergillus oryzae (strain ATCC 42149 / RIB 40) (Yellow koji mold).